Consider the following 517-residue polypeptide: L-amino-acid oxidase (517 aa).

The N-terminal stretch at 1-18 (MNVFFMFSLLFLAALESC) is a signal peptide. The cysteines at positions 29 and 192 are disulfide-linked. Residues 62-63 (MA), 82-83 (EA), arginine 90, and 106-109 (GPMR) contribute to the FAD site. Arginine 109 provides a ligand contact to substrate. Residue asparagine 191 is glycosylated (N-linked (GlcNAc...) asparagine). Position 280 (valine 280) interacts with FAD. Cysteines 350 and 431 form a disulfide. Tyrosine 391 serves as a coordination point for substrate. Residues glutamate 476 and 483 to 488 (GWIDST) contribute to the FAD site. 483–484 (GW) is a binding site for substrate.

Belongs to the flavin monoamine oxidase family. FIG1 subfamily. In terms of assembly, homodimer; non-covalently linked. It depends on FAD as a cofactor. N-glycosylated. As to expression, expressed by the venom gland.

It localises to the secreted. The catalysed reaction is an L-alpha-amino acid + O2 + H2O = a 2-oxocarboxylate + H2O2 + NH4(+). In terms of biological role, catalyzes an oxidative deamination of predominantly hydrophobic and aromatic L-amino acids, thus producing hydrogen peroxide that may contribute to the diverse toxic effects of this enzyme. Exhibits diverse biological activities, such as hemorrhage, hemolysis, edema, apoptosis of vascular endothelial cells or tumor cell lines, antibacterial and antiparasitic activities, as well as regulation of platelet aggregation. Its effect on platelets is controversial, since it either induces aggregation or inhibits agonist-induced aggregation. These different effects are probably due to different experimental conditions. This is L-amino-acid oxidase from Demansia vestigiata (Lesser black whip snake).